A 111-amino-acid chain; its full sequence is Large ribosomal subunit protein P2 (111 aa).

The disordered stretch occupies residues 81-111 (AAGGAAAPAAEEKKEEEKEESDEDMGFGLFD). Position 101 is a phosphoserine (serine 101).

This sequence belongs to the eukaryotic ribosomal protein P1/P2 family. In terms of assembly, P1 and P2 exist as dimers at the large ribosomal subunit.

Its function is as follows. Plays an important role in the elongation step of protein synthesis. The protein is Large ribosomal subunit protein P2 of Aspergillus fumigatus (strain ATCC MYA-4609 / CBS 101355 / FGSC A1100 / Af293) (Neosartorya fumigata).